The chain runs to 421 residues: 3-hydroxy-3-methylglutaryl-coenzyme A reductase (421 aa).

Residues E109, K240, and D315 each act as charge relay system in the active site. The active-site Proton donor is H410.

It belongs to the HMG-CoA reductase family.

It carries out the reaction (R)-mevalonate + 2 NADP(+) + CoA = (3S)-3-hydroxy-3-methylglutaryl-CoA + 2 NADPH + 2 H(+). It functions in the pathway metabolic intermediate biosynthesis; (R)-mevalonate biosynthesis; (R)-mevalonate from acetyl-CoA: step 3/3. In terms of biological role, converts HMG-CoA to mevalonate. The polypeptide is 3-hydroxy-3-methylglutaryl-coenzyme A reductase (hmgA) (Aeropyrum pernix (strain ATCC 700893 / DSM 11879 / JCM 9820 / NBRC 100138 / K1)).